Reading from the N-terminus, the 263-residue chain is Cytochrome c oxidase subunit 3 (263 aa).

The next 7 helical transmembrane spans lie at 7 to 27 (ITVL…KAHL), 44 to 64 (FSVG…VYSI), 78 to 98 (GMLS…WGIL), 120 to 140 (LILT…CLQF), 145 to 165 (GMSL…ECFA), 191 to 211 (VTGL…IYFI), and 241 to 261 (ITIL…YFFY).

This sequence belongs to the cytochrome c oxidase subunit 3 family. Component of the cytochrome c oxidase (complex IV, CIV), a multisubunit enzyme composed of a catalytic core of 3 subunits and several supernumerary subunits. The complex exists as a monomer or a dimer and forms supercomplexes (SCs) in the inner mitochondrial membrane with ubiquinol-cytochrome c oxidoreductase (cytochrome b-c1 complex, complex III, CIII).

It localises to the mitochondrion inner membrane. It catalyses the reaction 4 Fe(II)-[cytochrome c] + O2 + 8 H(+)(in) = 4 Fe(III)-[cytochrome c] + 2 H2O + 4 H(+)(out). Component of the cytochrome c oxidase, the last enzyme in the mitochondrial electron transport chain which drives oxidative phosphorylation. The respiratory chain contains 3 multisubunit complexes succinate dehydrogenase (complex II, CII), ubiquinol-cytochrome c oxidoreductase (cytochrome b-c1 complex, complex III, CIII) and cytochrome c oxidase (complex IV, CIV), that cooperate to transfer electrons derived from NADH and succinate to molecular oxygen, creating an electrochemical gradient over the inner membrane that drives transmembrane transport and the ATP synthase. Cytochrome c oxidase is the component of the respiratory chain that catalyzes the reduction of oxygen to water. Electrons originating from reduced cytochrome c in the intermembrane space (IMS) are transferred via the dinuclear copper A center (CU(A)) of subunit 2 and heme A of subunit 1 to the active site in subunit 1, a binuclear center (BNC) formed by heme A3 and copper B (CU(B)). The BNC reduces molecular oxygen to 2 water molecules using 4 electrons from cytochrome c in the IMS and 4 protons from the mitochondrial matrix. The polypeptide is Cytochrome c oxidase subunit 3 (COIII) (Plasmodium vivax).